Here is a 263-residue protein sequence, read N- to C-terminus: Insulin-like growth factor-binding protein 1 (263 aa).

A signal peptide spans 1–25 (MPEVLAVRAWPLLLSLAVQLGATVG). An IGFBP N-terminal domain is found at 28-109 (QPWRCAPCSA…TRGQGACMTT (82 aa)). 6 disulfides stabilise this stretch: cysteine 32-cysteine 59, cysteine 35-cysteine 61, cysteine 43-cysteine 62, cysteine 50-cysteine 65, cysteine 73-cysteine 86, and cysteine 80-cysteine 106. The interval 102-131 (GQGACMTTPSDEATDTKDTTSPENVSPESS) is disordered. Phosphoserine occurs at positions 122, 127, 130, 148, and 160. The segment covering 122 to 131 (SPENVSPESS) has biased composition (polar residues). At tyrosine 162 the chain carries Phosphotyrosine. One can recognise a Thyroglobulin type-1 domain in the interval 177–255 (KEPCQRELYK…SVAVRGDPKC (79 aa)). 3 disulfide bridges follow: cysteine 180/cysteine 210, cysteine 221/cysteine 232, and cysteine 234/cysteine 255. Position 246 is a phosphoserine (serine 246). Positions 250–252 (RGD) match the Cell attachment site motif.

In terms of assembly, binds equally well IGF1 and IGF2. Interacts with integrin ITGA5:ITGB1. Interacts with VHL; this interaction inhibits HIF1A degradation.

Its subcellular location is the secreted. Multifunctional protein that plays a critical role in regulating the availability of IGFs such as IGF1 and IGF2 to their receptors and thereby regulates IGF-mediated cellular processes including cell migration, proliferation, differentiation or apoptosis in a cell-type specific manner. Also plays a positive role in cell migration by interacting with integrin ITGA5:ITGB1 through its RGD motif. Mechanistically, binding to integrins leads to activation of focal adhesion kinase/PTK2 and stimulation of the mitogen-activated protein kinase (MAPK) pathway. Regulates cardiomyocyte apoptosis by suppressing HIF-1alpha/HIF1A degradation through ubiquitination. The protein is Insulin-like growth factor-binding protein 1 (IGFBP1) of Bos taurus (Bovine).